A 126-amino-acid polypeptide reads, in one-letter code: Large ribosomal subunit protein uL22 (126 aa).

The protein belongs to the universal ribosomal protein uL22 family. As to quaternary structure, part of the 50S ribosomal subunit.

In terms of biological role, this protein binds specifically to 23S rRNA; its binding is stimulated by other ribosomal proteins, e.g. L4, L17, and L20. It is important during the early stages of 50S assembly. It makes multiple contacts with different domains of the 23S rRNA in the assembled 50S subunit and ribosome. The globular domain of the protein is located near the polypeptide exit tunnel on the outside of the subunit, while an extended beta-hairpin is found that lines the wall of the exit tunnel in the center of the 70S ribosome. This chain is Large ribosomal subunit protein uL22, found in Prochlorococcus marinus (strain NATL2A).